The chain runs to 179 residues: Segregation and condensation protein B (179 aa).

Belongs to the ScpB family. In terms of assembly, homodimer. Homodimerization may be required to stabilize the binding of ScpA to the Smc head domains. Component of a cohesin-like complex composed of ScpA, ScpB and the Smc homodimer, in which ScpA and ScpB bind to the head domain of Smc. The presence of the three proteins is required for the association of the complex with DNA.

It localises to the cytoplasm. In terms of biological role, participates in chromosomal partition during cell division. May act via the formation of a condensin-like complex containing Smc and ScpA that pull DNA away from mid-cell into both cell halves. This chain is Segregation and condensation protein B, found in Streptococcus equi subsp. equi (strain 4047).